We begin with the raw amino-acid sequence, 1132 residues long: Serine/threonine-protein kinase spk-1 (1132 aa).

A helical transmembrane segment spans residues glycine 75–phenylalanine 95. 2 disordered regions span residues asparagine 240–aspartate 388 and asparagine 419–glycine 481. 2 stretches are compositionally biased toward acidic residues: residues serine 281 to glutamate 290 and aspartate 311 to glutamate 336. The segment covering aspartate 362–threonine 372 has biased composition (low complexity). A compositionally biased stretch (acidic residues) spans proline 373–aspartate 388. A compositionally biased stretch (basic and acidic residues) spans lysine 421–aspartate 433. A compositionally biased stretch (low complexity) spans valine 434 to serine 443. The 550-residue stretch at tyrosine 495 to leucine 1044 folds into the Protein kinase domain. ATP contacts are provided by residues leucine 501–valine 509 and lysine 524. Catalysis depends on aspartate 628, which acts as the Proton acceptor. The interval glutamine 1066 to valine 1121 is disordered. Over residues serine 1084 to alanine 1096 the composition is skewed to low complexity.

Belongs to the protein kinase superfamily. Ser/Thr protein kinase family.

Its subcellular location is the membrane. The enzyme catalyses L-seryl-[protein] + ATP = O-phospho-L-seryl-[protein] + ADP + H(+). The catalysed reaction is L-threonyl-[protein] + ATP = O-phospho-L-threonyl-[protein] + ADP + H(+). Its function is as follows. Required for embryogenesis and germline development in both adult hermaphrodites and males. SR-protein kinase (SRPK) that binds directly to and phosphorylates RS domains. The protein is Serine/threonine-protein kinase spk-1 (spk-1) of Caenorhabditis briggsae.